The sequence spans 107 residues: Circadian clock oscillator protein KaiB (107 aa).

Belongs to the KaiB family. May undergo a major conformational rearrangment; in the free state forms homooligomers. When bound to KaiC switches to a monomeric thioredoxin-fold (KaiB(fs)). The active oscillator complex is probably KaiC(6):KaiB(6).

In terms of biological role, component of the KaiBC clock protein complex, which constitutes the main circadian regulator in cyanobacteria; it may modify the ATPase activity of KaiC. Functionally, may be a metamorphic protein which reversibly switches between an inactive tetrameric fold and a rare, thioredoxin-like monomeric fold (KaiB(fs)). KaiB(fs) binds phospho-KaiC, and perhaps clock output effectors. The chain is Circadian clock oscillator protein KaiB from Prochlorococcus marinus (strain NATL2A).